The sequence spans 89 residues: Small ribosomal subunit protein uS14 (89 aa).

This sequence belongs to the universal ribosomal protein uS14 family. Part of the 30S ribosomal subunit. Contacts proteins S3 and S10.

Binds 16S rRNA, required for the assembly of 30S particles and may also be responsible for determining the conformation of the 16S rRNA at the A site. The sequence is that of Small ribosomal subunit protein uS14 from Onion yellows phytoplasma (strain OY-M).